The sequence spans 180 residues: Der GTPase-activating protein YihI (180 aa).

Polar residues predominate over residues 1 to 10 (MKQPARTSQV). 2 disordered regions span residues 1–102 (MKQP…PRLT) and 158–180 (DAEDEKAEEDMYRLLKGSHRTPE). Basic and acidic residues predominate over residues 21–32 (TREEINQEARDR). A compositionally biased stretch (polar residues) spans 45–54 (SRANPATVSQ). A compositionally biased stretch (basic and acidic residues) spans 55–67 (KGDKSQSVKDPRI). The segment covering 84–93 (PANPVKAAKP) has biased composition (low complexity).

It belongs to the YihI family. In terms of assembly, interacts with Der.

Functionally, a GTPase-activating protein (GAP) that modifies Der/EngA GTPase function. May play a role in ribosome biogenesis. In Erwinia tasmaniensis (strain DSM 17950 / CFBP 7177 / CIP 109463 / NCPPB 4357 / Et1/99), this protein is Der GTPase-activating protein YihI.